Consider the following 456-residue polypeptide: Non-structural protein V (456 aa).

Positions 53 to 92 (SGESEQVEGGMSKDDGDVERRNLEDLSSTSPTDGTIGKRV) are disordered. The span at 63–76 (MSKDDGDVERRNLE) shows a compositional bias: basic and acidic residues. Position 257 is a phosphoserine; by host (Ser257). The tract at residues 265 to 324 (ISPEDEEPSSVGGKPNESIGRTIEGQSIRDNLQAKDNKSTDVPGAGPKDSAVKEEPPQKR) is disordered. Ser350 is subject to Phosphoserine; by host. Zn(2+)-binding residues include His408, Cys427, Cys431, Cys443, Cys445, Cys448, Cys452, and Cys455.

Belongs to the paramyxoviruses V protein family. In terms of assembly, interacts with host IFIH1/MDA5, DHX58/LGP2, STAT1 and STAT2. Interacts (via N-terminus) with host UBXN1 (via C-terminal UBX domain); this interaction inhibits interferon-alpha/beta (IFN-alpha/beta) production. Interacts with host RIGI regulatory protein (via CARDs domain) and host TRIM25 (via SPRY domain); these interactions prevent TRIM25-mediated ubiquitination of RIG-I and disrupts downstream RIG-I signaling.

The protein localises to the host cytoplasm. In terms of biological role, plays an essential role in the inhibition of host immune response. Prevents the establishment of cellular antiviral state by blocking interferon-alpha/beta (IFN-alpha/beta) production and signaling pathway. Interacts with host IFIH1/MDA5 and DHX58/LGP2 to inhibit the transduction pathway involved in the activation of IFN-beta promoter, thus protecting the virus against cell antiviral state. Blocks the type I interferon signaling pathway by interacting with host STAT1 and STAT2 and thereby inhibiting their phosphorylation and subsequent nuclear translocation. Efficiently blocks the type II interferon signaling pathway. Suppresses interferon induction by interacting with and stabilizing host UBXN1, a negative regulator of both RIG-I-like receptors (RLR) and NF-kappa-B pathways. Blocks the type I interferon signaling pathway by disrupting the RIG-I signaling pathway. This chain is Non-structural protein V (P/V/C), found in Cynopterus brachyotis (Lesser short-nosed fruit bat).